Here is a 131-residue protein sequence, read N- to C-terminus: Small ribosomal subunit protein uS11 (131 aa).

The protein belongs to the universal ribosomal protein uS11 family. Part of the 30S ribosomal subunit. Interacts with proteins S7 and S18. Binds to IF-3.

Its function is as follows. Located on the platform of the 30S subunit, it bridges several disparate RNA helices of the 16S rRNA. Forms part of the Shine-Dalgarno cleft in the 70S ribosome. In Clostridium novyi (strain NT), this protein is Small ribosomal subunit protein uS11.